The chain runs to 744 residues: Leucine-rich repeat extensin-like protein 1 (744 aa).

The signal sequence occupies residues 1–26 (MLFPPLRSLFLFTLLLSSVCFLQIKA). 2 N-linked (GlcNAc...) asparagine glycosylation sites follow: N71 and N77. LRR repeat units lie at residues 122–145 (LSDL…TFNR), 147–170 (KLLY…VLSL), 171–194 (PSLK…LFDR), 196–217 (LDAI…MGNS), 219–240 (VSAL…IGQM), 241–265 (GKTL…IGNL), 266–289 (KKVT…VGNM), 290–313 (KSLE…ICQL), and 315–336 (NLEN…CAAS). N253 is a glycosylation site (N-linked (GlcNAc...) asparagine). Residues N318 and N344 are each glycosylated (N-linked (GlcNAc...) asparagine). One copy of the LRR 10 repeat lies at 381 to 404 (FSPPPPTFKMSPEVRTLPPPIYVY). Residues 382 to 744 (SPPPPTFKMS…ASPPPPPSYY (363 aa)) form a contains the Ser-Pro(4) repeats region. Disordered regions lie at residues 408–445 (PPPP…PPPP), 518–537 (VYSS…PESS), 555–576 (PSPV…VYYP), and 658–744 (PPPS…PSYY). The span at 430 to 439 (SKMSPSVRAY) shows a compositional bias: low complexity. Pro residues predominate over residues 704–729 (YEPPPEYSYSSSPPPPSPTSYFPPMP).

Post-translationally, hydroxylated on proline residues in the S-P-P-P-P repeat. In terms of processing, O-glycosylated on hydroxyprolines. Expressed in root hair cells (at protein level).

It is found in the secreted. Its subcellular location is the cell wall. Functionally, modulates cell morphogenesis by regulating cell wall formation and assembly, and/or growth polarization. Together with LRX2, component of the extracellular mechanism regulating root hair morphogenesis and elongation. The sequence is that of Leucine-rich repeat extensin-like protein 1 (LRX1) from Arabidopsis thaliana (Mouse-ear cress).